Consider the following 430-residue polypeptide: Asparagine--tRNA ligase (430 aa).

This sequence belongs to the class-II aminoacyl-tRNA synthetase family. In terms of assembly, homodimer.

It localises to the cytoplasm. It carries out the reaction tRNA(Asn) + L-asparagine + ATP = L-asparaginyl-tRNA(Asn) + AMP + diphosphate + H(+). The sequence is that of Asparagine--tRNA ligase from Oceanobacillus iheyensis (strain DSM 14371 / CIP 107618 / JCM 11309 / KCTC 3954 / HTE831).